Reading from the N-terminus, the 317-residue chain is MAASVARVLKAAGGRQLLLMVARRRPVLRQPFLLMPRKFWGTSALRSEDQKQPPFSSTSAHAGTPEHAEEQYQQQQPPPRYTDQAGEESEGYESEEQLQQRILSAALQFVPDFGWSADAIAEGAKSLDMSAAAAGMFEDGGSELVLHFVTQCNSQLTELLEEEQKLVQLGTSEKKPTTQFLRDAVEARLRMHIPYIEQWPQALGMLLLPRNIPSSLKLLTAMVDDIWHYAGDQSTDVSWYTRRAVLTGIYNTTELVMLQDSSPDFEDTWKFLENRISEAMTMGTSVKQVASTGEAVIQGLMGAAVTLKNLTGLNQRR.

Residues 1 to 46 (MAASVARVLKAAGGRQLLLMVARRRPVLRQPFLLMPRKFWGTSALR) constitute a mitochondrion transit peptide. The interval 45–97 (LRSEDQKQPPFSSTSAHAGTPEHAEEQYQQQQPPPRYTDQAGEESEGYESEEQ) is disordered. Over residues 85 to 96 (AGEESEGYESEE) the composition is skewed to acidic residues. R243 is a binding site for a 1,2-diacylglycero-3-phosphoethanolamine.

It belongs to the COQ9 family. In terms of assembly, homodimer. Heterodimer; two heterodimers of COQ7:COQ9 come together on the same side of the lipid pseudo-bilayer and form a curved tetramer with a hydrophobic surface suitable for membrane interaction. These two tetramers assemble into a soluble octamer with a pseudo-bilayer of lipids captured within. Interacts with COQ7; this interaction allows ubiquinone (CoQ) isoprene intermediates presentation to COQ7 and facilitates the COQ7-mediated hydroxylase step.

It localises to the mitochondrion. It participates in cofactor biosynthesis; ubiquinone biosynthesis. In terms of biological role, membrane-associated protein that warps the membrane surface to access and bind aromatic isoprenes with high specificity, including ubiquinone (CoQ) isoprene intermediates and presents them directly to COQ7, therefore facilitating the COQ7-mediated hydroxylase step. Participates in the biosynthesis of coenzyme Q, also named ubiquinone, an essential lipid-soluble electron transporter for aerobic cellular respiration. In Xenopus tropicalis (Western clawed frog), this protein is Ubiquinone biosynthesis protein COQ9, mitochondrial.